The following is a 213-amino-acid chain: Na(+)-translocating NADH-quinone reductase subunit D (213 aa).

The next 7 membrane-spanning stretches (helical) occupy residues 14-34 (ALWI…ALAV), 42-62 (LTMG…VSLL), 77-97 (IIIS…FFNI), 101-121 (LSVF…AESM), 131-151 (FLDG…ISII), 154-174 (LFGF…YASA), and 183-203 (LGLM…VWLV).

It belongs to the NqrDE/RnfAE family. In terms of assembly, composed of six subunits; NqrA, NqrB, NqrC, NqrD, NqrE and NqrF.

Its subcellular location is the cell inner membrane. It catalyses the reaction a ubiquinone + n Na(+)(in) + NADH + H(+) = a ubiquinol + n Na(+)(out) + NAD(+). Functionally, NQR complex catalyzes the reduction of ubiquinone-1 to ubiquinol by two successive reactions, coupled with the transport of Na(+) ions from the cytoplasm to the periplasm. NqrA to NqrE are probably involved in the second step, the conversion of ubisemiquinone to ubiquinol. The chain is Na(+)-translocating NADH-quinone reductase subunit D from Chlamydia muridarum (strain MoPn / Nigg).